Consider the following 300-residue polypeptide: MEANIINGKAIAEDITGTLATCINDLKLQYSLVPCLIVVLVGDDPASHLYVRNKQRKAEMLGLRSETILLPSTTSESSLIDKIHELNNDDNVHGILVQLPVPKHIDKNLIINTIDPRKDVDGFHNDNVGRLFTGQKRNCLIPCTPRGCLYLIKTVTHNLSGSDAVVIGRSNIVGKPMACLLLGENCTVTTVHSATRNLSDYCSKADILVAAVGIPNFVKSSWIKPGAIVIDVGINSVEEDGVKKFVGDVNFAEAKNVASAITPVPGGVGPMTIAFLMVNTVMAACNQSGIENFVEKYLDL.

Residues G168–S170, S193, and I234 contribute to the NADP(+) site.

The protein belongs to the tetrahydrofolate dehydrogenase/cyclohydrolase family. In terms of assembly, homodimer.

It catalyses the reaction (6R)-5,10-methylene-5,6,7,8-tetrahydrofolate + NADP(+) = (6R)-5,10-methenyltetrahydrofolate + NADPH. It carries out the reaction (6R)-5,10-methenyltetrahydrofolate + H2O = (6R)-10-formyltetrahydrofolate + H(+). It functions in the pathway one-carbon metabolism; tetrahydrofolate interconversion. Catalyzes the oxidation of 5,10-methylenetetrahydrofolate to 5,10-methenyltetrahydrofolate and then the hydrolysis of 5,10-methenyltetrahydrofolate to 10-formyltetrahydrofolate. The protein is Bifunctional protein FolD of Ehrlichia canis (strain Jake).